Here is a 299-residue protein sequence, read N- to C-terminus: Protoheme IX farnesyltransferase (299 aa).

9 consecutive transmembrane segments (helical) span residues 25–45, 47–67, 95–115, 119–139, 147–167, 173–193, 218–238, 243–263, and 277–297; these read VVLL…RAGV, WTVL…AAAV, AAAL…LLTF, LAAW…TGFL, IVIG…AVTG, PLLL…ALAI, VHIL…FAIH, LYLA…IALY, and FSIW…YLLL.

Belongs to the UbiA prenyltransferase family. Protoheme IX farnesyltransferase subfamily.

The protein localises to the cell inner membrane. It catalyses the reaction heme b + (2E,6E)-farnesyl diphosphate + H2O = Fe(II)-heme o + diphosphate. Its pathway is porphyrin-containing compound metabolism; heme O biosynthesis; heme O from protoheme: step 1/1. Functionally, converts heme B (protoheme IX) to heme O by substitution of the vinyl group on carbon 2 of heme B porphyrin ring with a hydroxyethyl farnesyl side group. This Stutzerimonas stutzeri (strain A1501) (Pseudomonas stutzeri) protein is Protoheme IX farnesyltransferase.